A 2153-amino-acid chain; its full sequence is Non-reducing polyketide synthase albA (2153 aa).

Residues 8-244 are N-terminal acylcarrier protein transacylase domain (SAT); sequence YLFGDQTSDI…VKAPIHGPYH (237 aa). The Ketosynthase family 3 (KS3) domain maps to 375-806; it reads NSKIAIIGMS…GGNTALLLED (432 aa). Active-site for beta-ketoacyl synthase activity residues include Cys547, His682, and His724. Positions 912 to 1232 are malonyl-CoA:ACP transacylase (MAT) domain; that stretch reads FVFTGQGAQY…LASLHLAGID (321 aa). Ser1001 acts as the For acyl/malonyl transferase activity in catalysis. An N-terminal hotdog fold region spans residues 1286-1425; that stretch reads HEYLTTAAQK…CTVRFFDCAA (140 aa). The PKS/mFAS DH domain maps to 1286-1598; the sequence is HEYLTTAAQK…FQALSRKILD (313 aa). Residues 1290 to 1603 are product template (PT) domain; it reads TTAAQKVIET…RKILDTVLPP (314 aa). His1326 serves as the catalytic Proton acceptor; for dehydratase activity. The tract at residues 1452–1598 is C-terminal hotdog fold; it reads DAHRLGRGMV…FQALSRKILD (147 aa). The active-site Proton donor; for dehydratase activity is the Asp1511. Residues 1608–1643 form a disordered region; it reads KGPARPAASAQKAAPAAAASKSRASAPAPAKPAAKP. Positions 1610-1643 are enriched in low complexity; sequence PARPAASAQKAAPAAAASKSRASAPAPAKPAAKP. A Carrier 1 domain is found at 1643–1720; the sequence is PSAPSLVKRA…DFKQFLAPMS (78 aa). Residue Ser1680 is modified to O-(pantetheine 4'-phosphoryl)serine. A disordered region spans residues 1720–1765; the sequence is SQGEASDGSTSDPESSSSFNGGSSTDESSAGSPVSSPPNEKVTQVE. The span at 1725 to 1748 shows a compositional bias: low complexity; the sequence is SDGSTSDPESSSSFNGGSSTDESS. The span at 1749–1765 shows a compositional bias: polar residues; the sequence is AGSPVSSPPNEKVTQVE. Positions 1764–1841 constitute a Carrier 2 domain; it reads VEQHATIKEI…DVEDALGLKP (78 aa). Ser1801 is subject to O-(pantetheine 4'-phosphoryl)serine. The tract at residues 1879 to 2151 is claisen cyclase domain; the sequence is SPHPRSTSIL…ELGSFIGNAM (273 aa). Catalysis depends on Ser1969, which acts as the For Claisen cyclase activity.

It catalyses the reaction 6 malonyl-CoA + acetyl-CoA + 6 H(+) = naphtopyrone YWA1 + 6 CO2 + 7 CoA + H2O. It functions in the pathway secondary metabolite biosynthesis. Its function is as follows. Non-reducing polyketide synthase; part of the gene cluster that mediates the biosynthesis of aurasperone B, a dimeric gamma-naphthopyrone. The first step in the biosynthesis of aurasperone B is the production of gamma-naphthopyrone precursor YWA1 by the non-reducing polyketide synthase albA, via condensation of one acetyl-CoA starter unit with 6 malonyl-CoA units. YWA1 is then methylated by aunE at position C-6 to yield foncesin which is further methylated at position C-8 by aunD to produce fonsecin B. A key enzyme in the biosynthetic pathway is the cytochrome P450 monooxygenase aunB which catalyzes the oxidative dimerization of fonsecin B to aurasperone B. AunB also catalyzes the oxidative dimerization of rubrofusarin B into aurasperone A. The chain is Non-reducing polyketide synthase albA from Aspergillus niger (strain ATCC MYA-4892 / CBS 513.88 / FGSC A1513).